Consider the following 367-residue polypeptide: Cytochrome-c peroxidase IdrP2 (367 aa).

The first 28 residues, 1–28, serve as a signal peptide directing secretion; that stretch reads MTTHQSIRRLSRIAALVGLAFVAGTVAA. 2 Cytochrome c domains span residues 47–157 and 200–345; these read DMVE…AMWQ and SQQK…EALS. Cys-69, Cys-72, His-73, Cys-215, Cys-218, and His-219 together coordinate heme c.

In terms of assembly, the iodate reductase (Idr) complex is composed of a molybdopterin-dependent iodate reductase (IdrA and IdrB subunits) and two associated peroxidases (IdrP1 and IdrP2). It depends on heme c as a cofactor.

Its subcellular location is the periplasm. The enzyme catalyses 2 Fe(II)-[cytochrome c] + H2O2 + 2 H(+) = 2 Fe(III)-[cytochrome c] + 2 H2O. In terms of biological role, involved in iodate respiration. May play a critical role in detoxification of inadvertent H(2)O(2) generated by the iodate reductase IdrA/IdrB. In Denitromonas iodatirespirans, this protein is Cytochrome-c peroxidase IdrP2.